Consider the following 267-residue polypeptide: Undecaprenyl-diphosphatase (267 aa).

Transmembrane regions (helical) follow at residues M1 to I21, Q39 to F59, W87 to V107, S113 to A133, T144 to T164, F189 to L209, L219 to I239, and V244 to L264.

The protein belongs to the UppP family.

It is found in the cell inner membrane. The enzyme catalyses di-trans,octa-cis-undecaprenyl diphosphate + H2O = di-trans,octa-cis-undecaprenyl phosphate + phosphate + H(+). Catalyzes the dephosphorylation of undecaprenyl diphosphate (UPP). Confers resistance to bacitracin. This Psychromonas ingrahamii (strain DSM 17664 / CCUG 51855 / 37) protein is Undecaprenyl-diphosphatase.